Here is a 326-residue protein sequence, read N- to C-terminus: 3-isopropylmalate dehydrogenase (326 aa).

The substrate site is built by Arg81, Arg91, Arg112, and Asp198. Mg(2+) is bound by residues Asp198, Asp222, and Asp226. Position 255–267 (255–267) interacts with NAD(+); sequence GAAFDIAGKGIAN.

The protein belongs to the isocitrate and isopropylmalate dehydrogenases family. In terms of assembly, homotetramer. Mg(2+) is required as a cofactor. Mn(2+) serves as cofactor.

It localises to the cytoplasm. The catalysed reaction is (2R,3S)-3-isopropylmalate + NAD(+) = 4-methyl-2-oxopentanoate + CO2 + NADH. The protein operates within amino-acid biosynthesis; L-leucine biosynthesis; L-leucine from 3-methyl-2-oxobutanoate: step 3/4. Functionally, catalyzes the oxidation of 3-carboxy-2-hydroxy-4-methylpentanoate (3-isopropylmalate) to 3-carboxy-4-methyl-2-oxopentanoate. The product decarboxylates to 4-methyl-2 oxopentanoate. In Archaeoglobus fulgidus (strain ATCC 49558 / DSM 4304 / JCM 9628 / NBRC 100126 / VC-16), this protein is 3-isopropylmalate dehydrogenase (leuB).